Consider the following 130-residue polypeptide: MAQAQYAGTGRRKNAVARVRLVPGTGKITVNKKDVEEYIPHADLRLVINQPFAVTSTEGSYDVFVNVVGGGYAGQSGAIRHGIARALLEVDPDFRDALKRAGLLTRDARMVERKKPGLKKARKASQFSKR.

It belongs to the universal ribosomal protein uS9 family.

The protein is Small ribosomal subunit protein uS9 of Streptococcus mutans serotype c (strain ATCC 700610 / UA159).